We begin with the raw amino-acid sequence, 111 residues long: Resistin-like alpha (111 aa).

A signal peptide spans 1–23; the sequence is MKTATCSLLICVFLLQLMVPVNT. 5 disulfides stabilise this stretch: Cys55/Cys108, Cys67/Cys107, Cys76/Cys93, Cys78/Cys95, and Cys82/Cys97.

This sequence belongs to the resistin/FIZZ family. As to quaternary structure, monomer. In terms of tissue distribution, highest levels in adipose tissue.

The protein resides in the secreted. In terms of biological role, probable hormone. Plays a role in pulmonary vascular remodeling. This is Resistin-like alpha (Retnla) from Rattus norvegicus (Rat).